A 336-amino-acid chain; its full sequence is N-acetylornithine carbamoyltransferase (336 aa).

Carbamoyl phosphate contacts are provided by residues 49–52 (SMRT), Trp-77, and Arg-112. Glu-144 provides a ligand contact to N(2)-acetyl-L-ornithine. Residue 148 to 151 (HPCQ) participates in carbamoyl phosphate binding. N(2)-acetyl-L-ornithine-binding residues include Lys-252 and Leu-295. A carbamoyl phosphate-binding site is contributed by 294–295 (CL). The residue at position 302 (Lys-302) is an N6-carboxylysine. Arg-322 is a carbamoyl phosphate binding site.

This sequence belongs to the aspartate/ornithine carbamoyltransferase superfamily. AOTCase family. Homotrimer.

The protein localises to the cytoplasm. The enzyme catalyses N(2)-acetyl-L-ornithine + carbamoyl phosphate = N(2)-acetyl-L-citrulline + phosphate + H(+). Its pathway is amino-acid biosynthesis; L-arginine biosynthesis. Its activity is regulated as follows. Carboxylation at Lys-302 increases the catalytic activity of the enzyme. In terms of biological role, catalyzes the transfer of the carbamoyl group from carbamoyl phosphate to the delta-amino group of N(2)-acetyl-L-ornithine to produce N(2)-acetyl-L-citrulline. This is a step in an alternative arginine biosynthesis pathway. The enzyme has no activity with ornithine. This chain is N-acetylornithine carbamoyltransferase, found in Xylella fastidiosa (strain Temecula1 / ATCC 700964).